The chain runs to 255 residues: Putative glutamine amidotransferase YafJ (255 aa).

Cys-2 acts as the For GATase activity in catalysis. Residues Cys-2–Gly-251 enclose the Glutamine amidotransferase type-2 domain.

The protein is Putative glutamine amidotransferase YafJ (yafJ) of Escherichia coli (strain K12).